Here is a 152-residue protein sequence, read N- to C-terminus: 3-hydroxyacyl-[acyl-carrier-protein] dehydratase FabZ (152 aa).

His-57 is a catalytic residue.

Belongs to the thioester dehydratase family. FabZ subfamily.

It is found in the cytoplasm. It carries out the reaction a (3R)-hydroxyacyl-[ACP] = a (2E)-enoyl-[ACP] + H2O. In terms of biological role, involved in unsaturated fatty acids biosynthesis. Catalyzes the dehydration of short chain beta-hydroxyacyl-ACPs and long chain saturated and unsaturated beta-hydroxyacyl-ACPs. This Xanthomonas axonopodis pv. citri (strain 306) protein is 3-hydroxyacyl-[acyl-carrier-protein] dehydratase FabZ.